A 398-amino-acid polypeptide reads, in one-letter code: 4-hydroxy-3-methylbut-2-en-1-yl diphosphate synthase (ferredoxin) (398 aa).

Positions 306, 309, 340, and 347 each coordinate [4Fe-4S] cluster.

The protein belongs to the IspG family. [4Fe-4S] cluster is required as a cofactor.

It carries out the reaction (2E)-4-hydroxy-3-methylbut-2-enyl diphosphate + 2 oxidized [2Fe-2S]-[ferredoxin] + H2O = 2-C-methyl-D-erythritol 2,4-cyclic diphosphate + 2 reduced [2Fe-2S]-[ferredoxin] + H(+). The protein operates within isoprenoid biosynthesis; isopentenyl diphosphate biosynthesis via DXP pathway; isopentenyl diphosphate from 1-deoxy-D-xylulose 5-phosphate: step 5/6. In terms of biological role, converts 2C-methyl-D-erythritol 2,4-cyclodiphosphate (ME-2,4cPP) into 1-hydroxy-2-methyl-2-(E)-butenyl 4-diphosphate. This chain is 4-hydroxy-3-methylbut-2-en-1-yl diphosphate synthase (ferredoxin), found in Synechococcus sp. (strain CC9605).